The primary structure comprises 691 residues: Lipase 2 (691 aa).

Positions 1-37 are cleaved as a signal peptide; it reads MLRGQEERKYSIRKYSIGVVSVLAATMFVVSSHEAQA. Residues 34–72 show a composition bias toward polar residues; the sequence is EAQASEKTPTSNAAAQKETLNQPGEQGNAITSHQMQSGK. The segment at 34–267 is disordered; sequence EAQASEKTPT…KPTDKNTDNK (234 aa). A propeptide spanning residues 38 to 296 is cleaved from the precursor; sequence SEKTPTSNAA…ADAKKVRPLK (259 aa). Over residues 73 to 82 the composition is skewed to basic and acidic residues; sequence QLDDMHKENG. Polar residues-rich tracts occupy residues 83–115, 125–172, and 186–207; these read KSGT…NDNQ, SKQS…QPSI, and PTST…AQDA. Basic and acidic residues-rich tracts occupy residues 226 to 238 and 258 to 267; these read IDAK…RQSE and KPTDKNTDNK. Residue Ser-413 is the Nucleophile of the active site. A Ca(2+)-binding site is contributed by Gly-580. Asp-604 serves as the catalytic Charge relay system. Residue Asp-645 coordinates Ca(2+). His-646 (charge relay system) is an active-site residue. Residues Asp-648, Asp-653, and Asp-656 each contribute to the Ca(2+) site.

The protein belongs to the AB hydrolase superfamily. Lipase family.

It is found in the secreted. The catalysed reaction is a triacylglycerol + H2O = a diacylglycerol + a fatty acid + H(+). The sequence is that of Lipase 2 (lip2) from Staphylococcus aureus (strain Mu50 / ATCC 700699).